Reading from the N-terminus, the 618-residue chain is Membrane protein insertase YidC (618 aa).

6 helical membrane-spanning segments follow: residues 3–23, 363–383, 439–459, 478–498, 520–540, and 545–565; these read KNTI…SFLS, WGLS…IVVF, LPML…PSAI, FITF…FCLL, PQMA…LFVL, and SGLN…MIIL.

The protein belongs to the OXA1/ALB3/YidC family. Type 1 subfamily. In terms of assembly, interacts with the Sec translocase complex via SecD. Specifically interacts with transmembrane segments of nascent integral membrane proteins during membrane integration.

The protein resides in the cell membrane. In terms of biological role, required for the insertion and/or proper folding and/or complex formation of integral membrane proteins into the membrane. Involved in integration of membrane proteins that insert both dependently and independently of the Sec translocase complex, as well as at least some lipoproteins. Aids folding of multispanning membrane proteins. In Bacteroides fragilis (strain YCH46), this protein is Membrane protein insertase YidC.